A 254-amino-acid chain; its full sequence is Acetylglutamate kinase (254 aa).

Substrate-binding positions include glycine 40–glycine 41, arginine 62, and asparagine 154.

Belongs to the acetylglutamate kinase family. ArgB subfamily.

Its subcellular location is the cytoplasm. The catalysed reaction is N-acetyl-L-glutamate + ATP = N-acetyl-L-glutamyl 5-phosphate + ADP. Its pathway is amino-acid biosynthesis; L-arginine biosynthesis; N(2)-acetyl-L-ornithine from L-glutamate: step 2/4. In terms of biological role, catalyzes the ATP-dependent phosphorylation of N-acetyl-L-glutamate. This is Acetylglutamate kinase from Staphylococcus aureus (strain Mu3 / ATCC 700698).